Reading from the N-terminus, the 366-residue chain is Chorismate synthase (366 aa).

R47 and R53 together coordinate NADP(+). FMN is bound by residues 124–126, G286, 301–305, and R327; these read RSS and KPTAT.

The protein belongs to the chorismate synthase family. Homotetramer. The cofactor is FMNH2.

The enzyme catalyses 5-O-(1-carboxyvinyl)-3-phosphoshikimate = chorismate + phosphate. It participates in metabolic intermediate biosynthesis; chorismate biosynthesis; chorismate from D-erythrose 4-phosphate and phosphoenolpyruvate: step 7/7. Its function is as follows. Catalyzes the anti-1,4-elimination of the C-3 phosphate and the C-6 proR hydrogen from 5-enolpyruvylshikimate-3-phosphate (EPSP) to yield chorismate, which is the branch point compound that serves as the starting substrate for the three terminal pathways of aromatic amino acid biosynthesis. This reaction introduces a second double bond into the aromatic ring system. The protein is Chorismate synthase of Microcystis aeruginosa (strain NIES-843 / IAM M-2473).